The following is a 351-amino-acid chain: tRNA pseudouridine synthase D (351 aa).

The active-site Nucleophile is Asp96. One can recognise a TRUD domain in the interval 174–304 (GAPNYFGPQR…MKPERRPLVA (131 aa)). The interval 244–268 (VLPGEPEPSGAGPTGPLWGDGGTLA) is disordered.

This sequence belongs to the pseudouridine synthase TruD family.

It catalyses the reaction uridine(13) in tRNA = pseudouridine(13) in tRNA. In terms of biological role, responsible for synthesis of pseudouridine from uracil-13 in transfer RNAs. The chain is tRNA pseudouridine synthase D from Marinobacter nauticus (strain ATCC 700491 / DSM 11845 / VT8) (Marinobacter aquaeolei).